The following is a 452-amino-acid chain: Probable V-type proton ATPase subunit H (452 aa).

It belongs to the V-ATPase H subunit family. V-ATPase is a heteromultimeric enzyme composed of a peripheral catalytic V1 complex (components A to H) attached to an integral membrane V0 proton pore complex (components: a, c, c', c'' and d).

Its function is as follows. Subunit of the peripheral V1 complex of vacuolar ATPase. Subunit H activates the ATPase activity of the enzyme and couples ATPase activity to proton flow. Vacuolar ATPase is responsible for acidifying a variety of intracellular compartments in eukaryotic cells, thus providing most of the energy required for transport processes in the vacuolar system. This chain is Probable V-type proton ATPase subunit H, found in Oryza sativa subsp. japonica (Rice).